Consider the following 223-residue polypeptide: Ribose-5-phosphate isomerase A (223 aa).

Residues 32 to 35 (TGST), 85 to 88 (DGAD), and 98 to 101 (KGGG) contribute to the substrate site. Catalysis depends on Glu107, which acts as the Proton acceptor. Lys125 contributes to the substrate binding site.

It belongs to the ribose 5-phosphate isomerase family. In terms of assembly, homodimer.

It carries out the reaction aldehydo-D-ribose 5-phosphate = D-ribulose 5-phosphate. It participates in carbohydrate degradation; pentose phosphate pathway; D-ribose 5-phosphate from D-ribulose 5-phosphate (non-oxidative stage): step 1/1. In terms of biological role, catalyzes the reversible conversion of ribose-5-phosphate to ribulose 5-phosphate. The sequence is that of Ribose-5-phosphate isomerase A from Pseudomonas paraeruginosa (strain DSM 24068 / PA7) (Pseudomonas aeruginosa (strain PA7)).